We begin with the raw amino-acid sequence, 328 residues long: Deoxynucleotidyltransferase terminal-interacting protein 1 (328 aa).

2 disordered regions span residues 1-30 and 142-176; these read MGAT…GAAG and ELPG…HVLS. The span at 12 to 22 shows a compositional bias: gly residues; that stretch reads GPGGAERGGLE. The interval 56 to 147 is important for dimerization; that stretch reads MTTSFTDPAI…RLAHELPGIK (92 aa). A compositionally biased stretch (basic and acidic residues) spans 142–158; sequence ELPGIKRGRQAEEESHR. The segment at residues 158–172 is a DNA-binding region (a.T hook); the sequence is RGSPIPKKRKGRPPG. A Phosphoserine modification is found at S160. Positions 163-169 match the Nuclear localization signal motif; sequence PKKRKGR. The important for DNA and nucleosome binding stretch occupies residues 196–315; sequence REGPKWDPAR…MRKYMETLRT (120 aa). The H-T-H motif DNA-binding region spans 215-236; that stretch reads GSRANKALGMGGTRGRIYIKHP.

In terms of assembly, monomer and homodimer. A minor proportion may form homotrimers. Interacts with ZNF541. Interacts with the terminal deoxynucleotidyltransferase DNTT. Interacts with TRERF1. Identified in a histone deacetylase complex that contains DNTTIP1, HDAC1 and MIDEAS; this complex assembles into a tetramer that contains four copies of each protein chain. Component of a histone deacetylase complex containing DNTTIP1, ZNF541, HDAC1 and HDAC2. Identified in a complex with KCTD19, HDAC1, HDAC2 and ZNF541.

Its subcellular location is the nucleus. Its function is as follows. Increases DNTT terminal deoxynucleotidyltransferase activity (in vitro). Also acts as a transcriptional regulator, binding to the consensus sequence 5'-GNTGCATG-3' following an AT-tract. Associates with RAB20 promoter and positively regulates its transcription. Binds DNA and nucleosomes; may recruit HDAC1 complexes to nucleosomes or naked DNA. The protein is Deoxynucleotidyltransferase terminal-interacting protein 1 (Dnttip1) of Mus musculus (Mouse).